Consider the following 392-residue polypeptide: D-amino-acid oxidase 2 (392 aa).

FAD contacts are provided by Ser-10, Ile-13, Arg-33, Asp-34, Ala-45, Ser-46, Gly-50, and Asn-52. The anthranilate site is built by Phe-56, Tyr-245, Tyr-262, and Arg-311. (R)-lactate-binding residues include Tyr-245, Tyr-262, and Arg-311. FAD contacts are provided by Arg-311, Gly-361, Ser-362, Gly-364, and Gln-366. Position 362 (Ser-362) interacts with anthranilate. Ser-362 serves as a coordination point for (R)-lactate. A Microbody targeting signal motif is present at residues Ala-390 to Leu-392.

The protein belongs to the DAMOX/DASOX family. The cofactor is FAD.

It localises to the peroxisome matrix. It catalyses the reaction a D-alpha-amino acid + O2 + H2O = a 2-oxocarboxylate + H2O2 + NH4(+). The enzyme catalyses D-methionine + O2 + H2O = 4-methylsulfanyl-2-oxobutanoate + H2O2 + NH4(+). It carries out the reaction D-serine + O2 + H2O = 3-hydroxypyruvate + H2O2 + NH4(+). The catalysed reaction is D-histidine + O2 + H2O = 3-(imidazol-5-yl)pyruvate + H2O2 + NH4(+). It catalyses the reaction D-proline + O2 = 1-pyrroline-2-carboxylate + H2O2. The enzyme catalyses D-alanine + O2 + H2O = pyruvate + H2O2 + NH4(+). It carries out the reaction D-leucine + O2 + H2O = 4-methyl-2-oxopentanoate + H2O2 + NH4(+). The catalysed reaction is D-valine + O2 + H2O = 3-methyl-2-oxobutanoate + H2O2 + NH4(+). Its function is as follows. Catalyzes the oxidative deamination of D-amino acids with broad substrate specificity. Enables the organism to utilize D-amino acids as a source of nutrients. Enables the organism to utilize D-alanine, D-cysteine, D-histidine, D-leucine, D-methionine, D-phenylalanine, D-proline, D-serine, D-threonine, D-aspartate and D-valine as a nitrogen source and may also contribute to utlization of D-tryptophan, D-tyrosine and D-asparagine as a nitrogen source. Protects the organism from the toxicity of D-amino acids, including from D-alanine. May play a role in its interaction with the host. The protein is D-amino-acid oxidase 2 of Cryptococcus deuterogattii (strain R265) (Cryptococcus gattii VGII (strain R265)).